Here is a 409-residue protein sequence, read N- to C-terminus: Forkhead box protein A2 (409 aa).

Residues 150 to 241 (AKPPYSYISL…GNMFENGCYL (92 aa)) constitute a DNA-binding region (fork-head). Positions 250 to 262 (DKKLSKDPSRKTS) are enriched in basic and acidic residues. Positions 250–315 (DKKLSKDPSR…AASPTSQAQH (66 aa)) are disordered. A compositionally biased stretch (low complexity) spans 263–286 (EGGSNSSSESCNGNESPHSNSSSN).

The protein localises to the nucleus. Functionally, may play a crucial role in specification of both the axial mesendoderm and the ventral nervous system. The sequence is that of Forkhead box protein A2 (foxa2) from Danio rerio (Zebrafish).